Here is a 115-residue protein sequence, read N- to C-terminus: Protein SPIRAL1-like 2 (115 aa).

The disordered stretch occupies residues 29–48 (AKAKPAAAAEKETTPAPVKK).

It belongs to the SPIRAL1 family.

Acts in maintaining the cortical microtubules organization essential for anisotropic cell growth. The polypeptide is Protein SPIRAL1-like 2 (Oryza sativa subsp. japonica (Rice)).